The following is a 351-amino-acid chain: Phosphate acetyltransferase (351 aa).

It belongs to the phosphate acetyltransferase and butyryltransferase family.

It localises to the cytoplasm. The catalysed reaction is acetyl-CoA + phosphate = acetyl phosphate + CoA. It functions in the pathway metabolic intermediate biosynthesis; acetyl-CoA biosynthesis; acetyl-CoA from acetate: step 2/2. This is Phosphate acetyltransferase (pta) from Rickettsia prowazekii (strain Madrid E).